The following is a 61-amino-acid chain: Short neurotoxin 2 (61 aa).

4 cysteine pairs are disulfide-bonded: C3-C23, C17-C40, C42-C53, and C54-C59.

It belongs to the three-finger toxin family. Short-chain subfamily. Type I alpha-neurotoxin sub-subfamily. As to expression, expressed by the venom gland.

It localises to the secreted. Its function is as follows. Binds to muscle nicotinic acetylcholine receptor (nAChR) and inhibit acetylcholine from binding to the receptor, thereby impairing neuromuscular transmission. The polypeptide is Short neurotoxin 2 (Naja haje haje (Egyptian cobra)).